A 312-amino-acid chain; its full sequence is MKMKVLEAKIIYESDDLEKYKKIISDIFYSFGVTGLKIEEPILNKDPLNFYKDEKQFLISENSVSAYFPLNIYSEKRKKVLEETFAEKFSEDEDIVYNLDFYEYDEEDYQNSWKKYLFVEKVSEKFVVKPTWREYEKQDNELVIELDPGRAFGTGSHPTTSLLLKLMEEQDFSNKSVIDIGTGSGILMIAGKILGAGEVYGTDIDEFSMEVAKENLILNNISLNDVKLLKGNLLEVIENKKFDIVVCNILADILVKLLDEIKYILKENSIVLFSGIIEDKLNEVISKAEDVGLEVVEVKADKEWRAVYFKRK.

S-adenosyl-L-methionine-binding residues include threonine 160, glycine 181, aspartate 203, and asparagine 248.

The protein belongs to the methyltransferase superfamily. PrmA family.

The protein localises to the cytoplasm. It catalyses the reaction L-lysyl-[protein] + 3 S-adenosyl-L-methionine = N(6),N(6),N(6)-trimethyl-L-lysyl-[protein] + 3 S-adenosyl-L-homocysteine + 3 H(+). Its function is as follows. Methylates ribosomal protein L11. The protein is Ribosomal protein L11 methyltransferase of Fusobacterium nucleatum subsp. nucleatum (strain ATCC 25586 / DSM 15643 / BCRC 10681 / CIP 101130 / JCM 8532 / KCTC 2640 / LMG 13131 / VPI 4355).